We begin with the raw amino-acid sequence, 510 residues long: Inositol-3-phosphate synthase (510 aa).

Positions 70, 71, 72, 73, 143, 180, 190, 193, 230, 231, 232, 233, 281, 282, 306, 309, 340, 341, 342, 355, 393, 394, 422, and 423 each coordinate NAD(+).

Belongs to the myo-inositol 1-phosphate synthase family. NAD(+) is required as a cofactor.

It is found in the cytoplasm. The protein localises to the cytosol. It localises to the nucleus. It catalyses the reaction D-glucose 6-phosphate = 1D-myo-inositol 3-phosphate. It participates in polyol metabolism; myo-inositol biosynthesis; myo-inositol from D-glucose 6-phosphate: step 1/2. In terms of biological role, key enzyme in myo-inositol biosynthesis pathway that catalyzes the conversion of glucose 6-phosphate to 1-myo-inositol 1-phosphate in a NAD-dependent manner. This Zea mays (Maize) protein is Inositol-3-phosphate synthase.